A 319-amino-acid polypeptide reads, in one-letter code: Annexin A5 (319 aa).

Ala2 carries the post-translational modification N-acetylalanine. Annexin repeat units follow at residues 13 to 84 (FDGR…AMMK), 85 to 156 (PSRL…VLLQ), 168 to 240 (AQVE…AVVK), and 244 to 315 (SIPA…LLCG). Lys27 is covalently cross-linked (Glycyl lysine isopeptide (Lys-Gly) (interchain with G-Cter in SUMO1); alternate). Residue Lys27 forms a Glycyl lysine isopeptide (Lys-Gly) (interchain with G-Cter in SUMO2); alternate linkage. A Phosphoserine modification is found at Ser35. Lys68, Lys74, Lys77, Lys95, and Lys99 each carry N6-acetyllysine. The residue at position 288 (Lys288) is an N6-succinyllysine. The [IL]-x-C-x-x-[DE] motif motif lies at 312-318 (LLCGGED).

Belongs to the annexin family. In terms of assembly, monomer. Binds ATRX and EIF5B. In terms of processing, S-nitrosylation is induced by interferon-gamma and oxidatively-modified low-densitity lipoprotein (LDL(ox)) possibly implicating the iNOS-S100A8/9 transnitrosylase complex.

In terms of biological role, this protein is an anticoagulant protein that acts as an indirect inhibitor of the thromboplastin-specific complex, which is involved in the blood coagulation cascade. The polypeptide is Annexin A5 (Anxa5) (Mus musculus (Mouse)).